The chain runs to 141 residues: Putative nickel-responsive regulator (141 aa).

Residues His80, His91, His93, and Cys99 each coordinate Ni(2+).

This sequence belongs to the transcriptional regulatory CopG/NikR family. Ni(2+) is required as a cofactor.

Transcriptional regulator. The chain is Putative nickel-responsive regulator from Methanococcus aeolicus (strain ATCC BAA-1280 / DSM 17508 / OCM 812 / Nankai-3).